The sequence spans 339 residues: Adenosine deaminase (339 aa).

Residues H15 and H17 each coordinate Zn(2+). The substrate site is built by H17, D19, and G172. H199 serves as a coordination point for Zn(2+). Residue E202 is the Proton donor of the active site. Residue D279 coordinates Zn(2+).

The protein belongs to the metallo-dependent hydrolases superfamily. Adenosine and AMP deaminases family. Adenosine deaminase subfamily. Requires Zn(2+) as cofactor.

It carries out the reaction adenosine + H2O + H(+) = inosine + NH4(+). The catalysed reaction is 2'-deoxyadenosine + H2O + H(+) = 2'-deoxyinosine + NH4(+). In terms of biological role, catalyzes the hydrolytic deamination of adenosine and 2-deoxyadenosine. This Lacticaseibacillus paracasei (strain ATCC 334 / BCRC 17002 / CCUG 31169 / CIP 107868 / KCTC 3260 / NRRL B-441) (Lactobacillus paracasei) protein is Adenosine deaminase.